Reading from the N-terminus, the 443-residue chain is Phosphoglucosamine mutase (443 aa).

Ser-100 functions as the Phosphoserine intermediate in the catalytic mechanism. Positions 100, 240, 242, and 244 each coordinate Mg(2+). A Phosphoserine modification is found at Ser-100.

This sequence belongs to the phosphohexose mutase family. It depends on Mg(2+) as a cofactor. In terms of processing, activated by phosphorylation.

It catalyses the reaction alpha-D-glucosamine 1-phosphate = D-glucosamine 6-phosphate. Functionally, catalyzes the conversion of glucosamine-6-phosphate to glucosamine-1-phosphate. This Carboxydothermus hydrogenoformans (strain ATCC BAA-161 / DSM 6008 / Z-2901) protein is Phosphoglucosamine mutase.